The following is a 346-amino-acid chain: Dehydrogenase azaJ (346 aa).

43–48 (VDYATQ) provides a ligand contact to NADP(+). 133–140 (LAFSTAIV) contacts substrate. Residues 170–173 (ATSV), 193–196 (SPHN), Tyr-211, and 251–252 (LN) each bind NADP(+). 269–273 (APPNV) is a binding site for substrate. NADP(+) is bound at residue 336 to 337 (VS).

This sequence belongs to the zinc-containing alcohol dehydrogenase family.

It functions in the pathway secondary metabolite biosynthesis. Its function is as follows. Dehydrogenase; part of the gene cluster that mediates the biosynthesis of azaphilones, a class of fungal metabolites characterized by a highly oxygenated pyrano-quinone bicyclic core and exhibiting a broad range of bioactivities. In the first step, the non-reducing polyketide synthase azaA forms the hexaketide precursor from successive condensations of five malonyl-CoA units, presumably with a simple acetyl-CoA starter unit. The reactive polyketide chain then undergoes a PT-mediated C2-C7 cyclization to afford the aromatic ring and is eventually released as an aldehyde through the R-domain. The putative ketoreductase azaE is proposed to catalyze the reduction of the terminal ketone resulting in the early culture product FK17-P2a. The monooxygenase azaH was demonstrated to be the only enzyme required to convert FK17-P2a to azanigerone E. AzaH first hydroxylates the benzaldehyde intermediate FK17-P2a at C4, which triggers the formation of the pyran-ring to afford azanigerone E. In parallel, the 2,4-dimethylhexanoyl chain is synthesized by the HR-PKS azaB and is proposed to be transferred to the C4-hydroxyl of azanigerone E by the acyltransferase azaD directly from the ACP domain of azaB. Alternatively, the 2,4-dimethyl-hexanoyl chain may be offloaded from the HR-PKS as a carboxylic acid and converted to an acyl-CoA by azaF. The resulting acyl-CoA molecule could then be taken up as a substrate by AzaD to form azanigerone B. To yield the carboxylic acid substituent in azanigerone A, the hydroxypropyl side chain of azanigerone B would need to undergo a C-C oxidative cleavage catalyzed by cytochrome P450 AzaI. AzaI is proposed to act on a vicinal diol that leads to a C-C bond scission either through an alkoxyradical intermediate or a peroxy complex. In the biosynthesis of azanigerone A, azanigerone B first undergoes hydroxylation at C10, possibly catalyzed by one of the two FAD-dependent monooxygenases encoded in the cluster, azaG or azaL, resulting in the vicinal diol azanigerone C. Oxidative cleavage of azanigerone C by azaI would yield the corresponding aldehyde derivative of azanigerone A. Finally, the dehydrogenase azaJ is proposed to convert the aldehyde functional group into the carboxylic acid, completing the conversion from azanigerone B to azanigerone A. Alternatively, the oxidation of aldehyde to carboxylic acid may be catalyzed by the same P450 enzyme azaI via consecutive oxidation or by endogenous alcohol dehydrogenase. This Aspergillus niger (strain ATCC 1015 / CBS 113.46 / FGSC A1144 / LSHB Ac4 / NCTC 3858a / NRRL 328 / USDA 3528.7) protein is Dehydrogenase azaJ.